The chain runs to 456 residues: UDP-N-acetylmuramate--L-alanine ligase (456 aa).

Residue Gly-112–Thr-118 coordinates ATP.

The protein belongs to the MurCDEF family.

It is found in the cytoplasm. It carries out the reaction UDP-N-acetyl-alpha-D-muramate + L-alanine + ATP = UDP-N-acetyl-alpha-D-muramoyl-L-alanine + ADP + phosphate + H(+). It functions in the pathway cell wall biogenesis; peptidoglycan biosynthesis. Cell wall formation. This is UDP-N-acetylmuramate--L-alanine ligase from Trichlorobacter lovleyi (strain ATCC BAA-1151 / DSM 17278 / SZ) (Geobacter lovleyi).